A 133-amino-acid polypeptide reads, in one-letter code: Transcription antitermination protein NusB (133 aa).

This sequence belongs to the NusB family.

Its function is as follows. Involved in transcription antitermination. Required for transcription of ribosomal RNA (rRNA) genes. Binds specifically to the boxA antiterminator sequence of the ribosomal RNA (rrn) operons. This Pediococcus pentosaceus (strain ATCC 25745 / CCUG 21536 / LMG 10740 / 183-1w) protein is Transcription antitermination protein NusB.